The primary structure comprises 261 residues: Probable trans-aconitate 2-methyltransferase (261 aa).

This sequence belongs to the methyltransferase superfamily. Tam family.

The protein localises to the cytoplasm. The enzyme catalyses trans-aconitate + S-adenosyl-L-methionine = (E)-3-(methoxycarbonyl)pent-2-enedioate + S-adenosyl-L-homocysteine. Its function is as follows. Catalyzes the S-adenosylmethionine monomethyl esterification of trans-aconitate. In Mycobacterium bovis (strain ATCC BAA-935 / AF2122/97), this protein is Probable trans-aconitate 2-methyltransferase.